The primary structure comprises 219 residues: uncharacterized protein (219 aa).

Residues 57 to 158 enclose the HD domain; sequence QLEHMTRAAM…LSEASRQTLL (102 aa).

This is an uncharacterized protein from Acanthamoeba polyphaga mimivirus (APMV).